Reading from the N-terminus, the 230-residue chain is Ephrin-A3 (230 aa).

Residues 1 to 22 (MAAAPLLLLLLLVPVPLLPLLA) form the signal peptide. The Ephrin RBD domain maps to 30–161 (GNRHAVYWNS…RMKVFVCCAS (132 aa)). Asn38, Asn67, Asn84, and Asn92 each carry an N-linked (GlcNAc...) asparagine glycan. 2 disulfides stabilise this stretch: Cys63-Cys102 and Cys91-Cys150. The GPI-anchor amidated glycine moiety is linked to residue Gly206. A propeptide spans 207 to 230 (TSPKREHLPLAVGIAFFLMTLLAS) (removed in mature form).

The protein belongs to the ephrin family. As to quaternary structure, interacts with EPHA8; activates EPHA8. In terms of tissue distribution, expressed in myogenic progenitor cells.

The protein localises to the cell membrane. In terms of biological role, cell surface GPI-bound ligand for Eph receptors, a family of receptor tyrosine kinases which are crucial for migration, repulsion and adhesion during neuronal, vascular and epithelial development. Binds promiscuously Eph receptors residing on adjacent cells, leading to contact-dependent bidirectional signaling into neighboring cells. The signaling pathway downstream of the receptor is referred to as forward signaling while the signaling pathway downstream of the ephrin ligand is referred to as reverse signaling. This is Ephrin-A3 (Efna3) from Mus musculus (Mouse).